The sequence spans 283 residues: ATP phosphoribosyltransferase (283 aa).

This sequence belongs to the ATP phosphoribosyltransferase family. Long subfamily. Equilibrium between an active dimeric form, an inactive hexameric form and higher aggregates. Interconversion between the various forms is largely reversible and is influenced by the natural substrates and inhibitors of the enzyme. Mg(2+) serves as cofactor.

Its subcellular location is the cytoplasm. It carries out the reaction 1-(5-phospho-beta-D-ribosyl)-ATP + diphosphate = 5-phospho-alpha-D-ribose 1-diphosphate + ATP. Its pathway is amino-acid biosynthesis; L-histidine biosynthesis; L-histidine from 5-phospho-alpha-D-ribose 1-diphosphate: step 1/9. With respect to regulation, feedback inhibited by histidine. Catalyzes the condensation of ATP and 5-phosphoribose 1-diphosphate to form N'-(5'-phosphoribosyl)-ATP (PR-ATP). Has a crucial role in the pathway because the rate of histidine biosynthesis seems to be controlled primarily by regulation of HisG enzymatic activity. This Mycobacterium sp. (strain JLS) protein is ATP phosphoribosyltransferase.